The primary structure comprises 153 residues: D-aminoacyl-tRNA deacylase (153 aa).

The short motif at glycine 142–proline 143 is the Gly-cisPro motif, important for rejection of L-amino acids element.

Belongs to the DTD family. As to quaternary structure, homodimer.

Its subcellular location is the cytoplasm. It carries out the reaction glycyl-tRNA(Ala) + H2O = tRNA(Ala) + glycine + H(+). The enzyme catalyses a D-aminoacyl-tRNA + H2O = a tRNA + a D-alpha-amino acid + H(+). In terms of biological role, an aminoacyl-tRNA editing enzyme that deacylates mischarged D-aminoacyl-tRNAs. Also deacylates mischarged glycyl-tRNA(Ala), protecting cells against glycine mischarging by AlaRS. Acts via tRNA-based rather than protein-based catalysis; rejects L-amino acids rather than detecting D-amino acids in the active site. By recycling D-aminoacyl-tRNA to D-amino acids and free tRNA molecules, this enzyme counteracts the toxicity associated with the formation of D-aminoacyl-tRNA entities in vivo and helps enforce protein L-homochirality. This chain is D-aminoacyl-tRNA deacylase, found in Cupriavidus taiwanensis (strain DSM 17343 / BCRC 17206 / CCUG 44338 / CIP 107171 / LMG 19424 / R1) (Ralstonia taiwanensis (strain LMG 19424)).